The chain runs to 443 residues: Gasdermin-A2 (443 aa).

Residues 1–249 form a triggers pyroptosis region; sequence MSMFEDVTRA…QGSTVQMISG (249 aa). 9-13 is an a cardiolipin binding site; the sequence is RALAR. 4 beta stranded membrane passes run 78-95, 99-120, 164-179, and 183-197; these read NFSFKNMLDVRVEGDVEV, MKVKGTVGLSQSSTLEVQMLSV, VTLKRASNAISKFSLN, and LGLQGSVNHKEAVTI. A coiled-coil region spans residues 249-312; sequence GEMHEDFKTL…GALDKGHEVT (64 aa).

This sequence belongs to the gasdermin family. As to quaternary structure, homooligomer; homooligomeric ring-shaped pore complex containing 18-36 subunits when inserted in the membrane. Cleavage relieves autoinhibition by releasing the N-terminal moiety (Gasdermin-A2, N-terminal) that initiates pyroptosis. In contrast to Gsdma, not cleaved by bacterial effector protein SpeB. Post-translationally, palmitoylated. In terms of tissue distribution, expressed in the gastrointestinal tract, specifically from the middle to the upper region of the gastric mucosa in the glandular stomach.

It localises to the cytoplasm. The protein localises to the perinuclear region. Its subcellular location is the cytosol. The protein resides in the cell membrane. With respect to regulation, the full-length protein before cleavage is inactive: intramolecular interactions between N- and C-terminal domains mediate autoinhibition in the absence of activation signal. The intrinsic pyroptosis-inducing activity is carried by the released N-terminal moiety (Gasdermin-A2, N-terminal). Its function is as follows. This form constitutes the precursor of the pore-forming protein and acts as a sensor of infection: upon bacterial infection, specifically cleaved by some bacterial effector protein, releasing the N-terminal moiety (Gasdermin-A2, N-terminal) that binds to membranes and forms pores, triggering pyroptosis. Pore-forming protein that causes membrane permeabilization and pyroptosis. Released upon cleavage of Gasdermin-A2, and binds to membrane inner leaflet lipids. Homooligomerizes within the membrane and forms pores of 10-15 nanometers (nm) of inner diameter, triggering pyroptosis. Binds to membrane inner leaflet lipids, such as phosphatidylinositol (4,5)-bisphosphate. This Mus musculus (Mouse) protein is Gasdermin-A2.